We begin with the raw amino-acid sequence, 338 residues long: Methionine import ATP-binding protein MetN 2 (338 aa).

The ABC transporter domain occupies 2–242 (IQLEGVSVDF…PQHAFTRQLV (241 aa)). Residue 39–46 (GTSGAGKS) participates in ATP binding.

Belongs to the ABC transporter superfamily. Methionine importer (TC 3.A.1.24) family. The complex is composed of two ATP-binding proteins (MetN), two transmembrane proteins (MetI) and a solute-binding protein (MetQ).

Its subcellular location is the cell inner membrane. The enzyme catalyses L-methionine(out) + ATP + H2O = L-methionine(in) + ADP + phosphate + H(+). It carries out the reaction D-methionine(out) + ATP + H2O = D-methionine(in) + ADP + phosphate + H(+). In terms of biological role, part of the ABC transporter complex MetNIQ involved in methionine import. Responsible for energy coupling to the transport system. The polypeptide is Methionine import ATP-binding protein MetN 2 (Pectobacterium atrosepticum (strain SCRI 1043 / ATCC BAA-672) (Erwinia carotovora subsp. atroseptica)).